Here is a 307-residue protein sequence, read N- to C-terminus: Actin maturation protease (307 aa).

The interval methionine 1–lysine 34 is disordered. Over residues alanine 9–proline 24 the composition is skewed to pro residues. Residues serine 80–glycine 200 are peptidase C39-like. Cysteine 88 is an active-site residue.

This sequence belongs to the ACTMAP family.

It is found in the cytoplasm. It catalyses the reaction N-terminal N(alpha)-acetyl-L-methionyl-L-aspartyl-[protein] + H2O = N-terminal L-aspartyl-[protein] + N-acetyl-L-methionine. The catalysed reaction is N-terminal N(alpha)-acetyl-L-methionyl-L-glutamyl-[protein] + H2O = N-terminal L-glutamyl-[protein] + N-acetyl-L-methionine. The enzyme catalyses N-terminal N(alpha)-acetyl-L-cysteinyl-L-aspartyl-[protein] + H2O = N-terminal L-aspartyl-[protein] + N-acetyl-L-cysteine. It carries out the reaction N-terminal N(alpha)-acetyl-L-cysteinyl-L-glutamyl-[protein] + H2O = N-terminal L-glutamyl-[protein] + N-acetyl-L-cysteine. In terms of biological role, actin maturation protease that specifically mediates the cleavage of immature acetylated N-terminal actin, thereby contributing to actin maturation. Cleaves N-terminal acetylated methionine of immature cytoplasmic actin after translation. Cleaves N-terminal acetylated cysteine of muscle actin after canonical removal of N-terminal methionine. This chain is Actin maturation protease, found in Danio rerio (Zebrafish).